The following is a 450-amino-acid chain: Chromosomal replication initiator protein DnaA (450 aa).

The domain I, interacts with DnaA modulators stretch occupies residues 1–84 (MTENEQIFWN…AVDYVYEEDL (84 aa)). The tract at residues 84–109 (LIIEQQHQGQQGYTEQAFQQLPAVQS) is domain II. A domain III, AAA+ region region spans residues 110-328 (DLNPKYSFDN…GALKDISLVA (219 aa)). Residues G154, G156, K157, and T158 each contribute to the ATP site. The tract at residues 329–450 (NFKQIDTITV…EIETIKNKIK (122 aa)) is domain IV, binds dsDNA.

This sequence belongs to the DnaA family. Oligomerizes as a right-handed, spiral filament on DNA at oriC.

It localises to the cytoplasm. Its function is as follows. Plays an essential role in the initiation and regulation of chromosomal replication. ATP-DnaA binds to the origin of replication (oriC) to initiate formation of the DNA replication initiation complex once per cell cycle. Binds the DnaA box (a 9 base pair repeat at the origin) and separates the double-stranded (ds)DNA. Forms a right-handed helical filament on oriC DNA; dsDNA binds to the exterior of the filament while single-stranded (ss)DNA is stabiized in the filament's interior. The ATP-DnaA-oriC complex binds and stabilizes one strand of the AT-rich DNA unwinding element (DUE), permitting loading of DNA polymerase. After initiation quickly degrades to an ADP-DnaA complex that is not apt for DNA replication. Binds acidic phospholipids. The sequence is that of Chromosomal replication initiator protein DnaA from Streptococcus equi subsp. zooepidemicus (strain MGCS10565).